We begin with the raw amino-acid sequence, 126 residues long: Profilin (126 aa).

Belongs to the profilin family. Occurs in many kinds of cells as a complex with monomeric actin in a 1:1 ratio.

It is found in the cytoplasm. The protein resides in the cytoskeleton. Functionally, binds to actin and affects the structure of the cytoskeleton. At high concentrations, profilin prevents the polymerization of actin, whereas it enhances it at low concentrations. By binding to PIP2, it inhibits the formation of IP3 and DG. This is Profilin from Bombyx mori (Silk moth).